Consider the following 277-residue polypeptide: Formamidopyrimidine-DNA glycosylase (277 aa).

The Schiff-base intermediate with DNA role is filled by Pro-2. Glu-3 (proton donor) is an active-site residue. The active-site Proton donor; for beta-elimination activity is the Lys-58. His-94, Arg-113, and Arg-156 together coordinate DNA. The FPG-type zinc-finger motif lies at 241–277; sequence LVYGREGVPCPNCGAEHPIQRITQAGRSTFFCPTCQK. Arg-267 serves as the catalytic Proton donor; for delta-elimination activity.

It belongs to the FPG family. Monomer. It depends on Zn(2+) as a cofactor.

It carries out the reaction Hydrolysis of DNA containing ring-opened 7-methylguanine residues, releasing 2,6-diamino-4-hydroxy-5-(N-methyl)formamidopyrimidine.. It catalyses the reaction 2'-deoxyribonucleotide-(2'-deoxyribose 5'-phosphate)-2'-deoxyribonucleotide-DNA = a 3'-end 2'-deoxyribonucleotide-(2,3-dehydro-2,3-deoxyribose 5'-phosphate)-DNA + a 5'-end 5'-phospho-2'-deoxyribonucleoside-DNA + H(+). Involved in base excision repair of DNA damaged by oxidation or by mutagenic agents. Acts as a DNA glycosylase that recognizes and removes damaged bases. Has a preference for oxidized purines, such as 7,8-dihydro-8-oxoguanine (8-oxoG). Has AP (apurinic/apyrimidinic) lyase activity and introduces nicks in the DNA strand. Cleaves the DNA backbone by beta-delta elimination to generate a single-strand break at the site of the removed base with both 3'- and 5'-phosphates. This chain is Formamidopyrimidine-DNA glycosylase, found in Gluconobacter oxydans (strain 621H) (Gluconobacter suboxydans).